The following is a 320-amino-acid chain: Putative polysaccharide deacetylase (320 aa).

The 235-residue stretch at 69 to 303 (RSIESCFEYG…ITSKEGVWVA (235 aa)) folds into the NodB homology domain.

This sequence belongs to the polysaccharide deacetylase family. Homodimer.

It is found in the prospore. In terms of biological role, may deacetylate chitin. Required for spore formation. This chain is Putative polysaccharide deacetylase, found in Schizosaccharomyces pombe (strain 972 / ATCC 24843) (Fission yeast).